Reading from the N-terminus, the 535-residue chain is Phosphoenolpyruvate carboxykinase (ATP) 1 (535 aa).

The substrate site is built by Arg-58, Tyr-193, and Lys-199. ATP contacts are provided by residues Lys-199, His-218, and 234 to 242; that span reads GLSGTGKTT. Residues Lys-199 and His-218 each contribute to the Mn(2+) site. Asp-255 provides a ligand contact to Mn(2+). ATP contacts are provided by residues Glu-283, Arg-321, 440–441, and Thr-446; that span reads RI. Residue Arg-321 coordinates substrate.

The protein belongs to the phosphoenolpyruvate carboxykinase (ATP) family. The cofactor is Mn(2+).

It is found in the cytoplasm. The enzyme catalyses oxaloacetate + ATP = phosphoenolpyruvate + ADP + CO2. The protein operates within carbohydrate biosynthesis; gluconeogenesis. Involved in the gluconeogenesis. Catalyzes the conversion of oxaloacetate (OAA) to phosphoenolpyruvate (PEP) through direct phosphoryl transfer between the nucleoside triphosphate and OAA. The protein is Phosphoenolpyruvate carboxykinase (ATP) 1 of Salinibacter ruber (strain DSM 13855 / M31).